The chain runs to 1579 residues: MAP kinase kinase kinase SSK2 (1579 aa).

Positions 1-70 are disordered; sequence MSHSDYFNYK…HSTQYFRSPN (70 aa). The segment covering 21 to 44 has biased composition (low complexity); that stretch reads SSKMRQSSSSSSSRLRSESLGRNS. A compositionally biased stretch (polar residues) spans 45-67; that stretch reads NTTQARVASSPISPGLHSTQYFR. Phosphoserine occurs at positions 57, 62, 78, and 118. Disordered regions lie at residues 97–155 and 190–243; these read FFHQ…ESEI and SIMS…GSTT. Residues 104–118 show a composition bias toward low complexity; sequence SGSSSSSARSSRRPS. Positions 127-139 are enriched in polar residues; sequence NPQQSLPKLSTQP. Basic and acidic residues predominate over residues 144–155; sequence KKVEASKTESEI. Serine 290 is modified (phosphoserine). The Protein kinase domain occupies 1266–1558; it reads WQKRNFIGGG…AVELLMDPWI (293 aa). Residues 1272-1280 and lysine 1295 each bind ATP; that span reads IGGGTFGRV. Aspartate 1390 (proton acceptor) is an active-site residue. Serine 1424 is modified (phosphoserine).

The protein belongs to the protein kinase superfamily. STE Ser/Thr protein kinase family. MAP kinase kinase kinase subfamily. In terms of assembly, interacts with by SSK1.

The enzyme catalyses L-seryl-[protein] + ATP = O-phospho-L-seryl-[protein] + ADP + H(+). It catalyses the reaction L-threonyl-[protein] + ATP = O-phospho-L-threonyl-[protein] + ADP + H(+). Its function is as follows. Kinase involved in a signal transduction pathway that is activated by changes in the osmolarity of the extracellular environment. Activates the PBS2 MAP kinase kinase by phosphorylation. This chain is MAP kinase kinase kinase SSK2 (SSK2), found in Saccharomyces cerevisiae (strain ATCC 204508 / S288c) (Baker's yeast).